The sequence spans 1281 residues: Dynactin subunit 1 (1281 aa).

Residues 1–25 (MAQSKRHVYSRTPSGSRMSAEASAR) form a disordered region. The region spanning 48–90 (GATLFATGKWVGVILDEAKGKNDGTVQGRKYFTCDEGHGIFVR) is the CAP-Gly domain. The disordered stretch occupies residues 99-225 (DGADTTSPET…EEEGLRAQVR (127 aa)). A compositionally biased stretch (polar residues) spans 102-114 (DTTSPETPDSSAS). Residues T108, T145, T146, and T147 each carry the phosphothreonine modification. Basic residues predominate over residues 129 to 152 (SKLRGPKPKKAPTARKTTTRRPKP). Low complexity predominate over residues 161–205 (AGASSSLGPSGSASAGELSSSEPSTPAQTPLAAPIIPTPALTSPG). Phosphoserine is present on residues S179 and S212. Basic and acidic residues predominate over residues 214–225 (SKEEEGLRAQVR). Coiled coils occupy residues 217–540 (EEGL…QQEA) and 952–1043 (IKEL…QSKR). An interaction with HPS6 region spans residues 911–1281 (EYDAERPPSK…LHQLHDRLIS (371 aa)). The segment at 1065–1084 (GEEQQRGGAPGQAPGIVPGP) is disordered.

It belongs to the dynactin 150 kDa subunit family. Monomer and homodimer. Subunit of dynactin, a multiprotein complex part of a tripartite complex with dynein and a adapter, such as BICDL1, BICD2 or HOOK3. The dynactin complex is built around ACTR1A/ACTB filament and consists of an actin-related filament composed of a shoulder domain, a pointed end and a barbed end. Its length is defined by its flexible shoulder domain. The soulder is composed of 2 DCTN1 subunits, 4 DCTN2 and 2 DCTN3. DCTN1/p150(glued) binds directly to microtubules and to cytoplasmic dynein. The 4 DCNT2 (via N-terminus) bind the ACTR1A filament and act as molecular rulers to determine the length. The pointed end is important for binding dynein-dynactin cargo adapters. Consists of 4 subunits: ACTR10, DCNT4, DCTN5 and DCTN6. The barbed end is composed of a CAPZA1:CAPZB heterodimers, which binds ACTR1A/ACTB filament and dynactin and stabilizes dynactin. Interacts with the C-terminus of MAPRE1, MAPRE2 and MAPRE3. Interacts (via C-terminus) with SNX6. Interacts with CLN3, DYNAP, ECPAS and FBXL5. Interacts with MISP; this interaction regulates its distribution at the cell cortex. Interacts with CEP131. Interacts with CEP126. Interacts with CLIP1. Interacts with dynein intermediate chain and dynein heavy chain. Interacts with PLK1 (via POLO-box domain). Interacts with TBCB. Binds preferentially to tyrosinated microtubules than to detyrosinated microtubules. Interacts with PARD6A. Interacts with HPS6. Interacts with KIF3A. Interacts with BICD2. Interacts with DST (isoform 9). Interacts with DST (isoform 1). Identified in a complex with MREG and RILP. Interacts with BCCIP (isoform 2/alpha). Interacts with DCDC1. Interacts with AKNA. Interacts with DYNC1I2. Interacts with RUFY3 and RUFY4. In terms of processing, ubiquitinated by a SCF complex containing FBXL5, leading to its degradation by the proteasome. Phosphorylation by SLK at Thr-145, Thr-146 and Thr-147 targets DCTN1 to the centrosome. It is uncertain if SLK phosphorylates all three threonines or one or two of them. PLK1-mediated phosphorylation at Ser-179 is essential for its localization in the nuclear envelope, promotes its dissociation from microtubules during early mitosis and positively regulates nuclear envelope breakdown during prophase.

Its subcellular location is the cytoplasm. It localises to the cytoskeleton. It is found in the microtubule organizing center. The protein resides in the centrosome. The protein localises to the centriole. Its subcellular location is the spindle. It localises to the nucleus envelope. It is found in the cell cortex. Functionally, part of the dynactin complex that activates the molecular motor dynein for ultra-processive transport along microtubules. Plays a key role in dynein-mediated retrograde transport of vesicles and organelles along microtubules by recruiting and tethering dynein to microtubules. Binds to both dynein and microtubules providing a link between specific cargos, microtubules and dynein. Essential for targeting dynein to microtubule plus ends, recruiting dynein to membranous cargos and enhancing dynein processivity (the ability to move along a microtubule for a long distance without falling off the track). Can also act as a brake to slow the dynein motor during motility along the microtubule. Can regulate microtubule stability by promoting microtubule formation, nucleation and polymerization and by inhibiting microtubule catastrophe in neurons. Inhibits microtubule catastrophe by binding both to microtubules and to tubulin, leading to enhanced microtubule stability along the axon. Plays a role in metaphase spindle orientation. Plays a role in centriole cohesion and subdistal appendage organization and function. Its recruitment to the centriole in a KIF3A-dependent manner is essential for the maintenance of centriole cohesion and the formation of subdistal appendage. Also required for microtubule anchoring at the mother centriole. Plays a role in primary cilia formation. This chain is Dynactin subunit 1 (DCTN1), found in Sus scrofa (Pig).